Consider the following 436-residue polypeptide: Histone acetyltransferase type B subunit 2 (436 aa).

WD repeat units follow at residues 136–176 (DHKG…SLPT), 187–227 (GHTK…KGNK), 237–277 (HHSS…TTRA), 284–324 (QHRD…TKLH), and 328–368 (SHTD…EEQT). An interaction with the histone H4 N-terminus region spans residues 370-374 (EDAQD). One copy of the WD 6 repeat lies at 385-425 (GHTNRISDFSWNLNDPWVLCSAAEDNLLQVWKVADAIVGKD).

The protein belongs to the WD repeat RBAP46/RBAP48/MSI1 family. As to quaternary structure, component of the HAT-B complex composed of at least hat1 and hat2. The HAT-B complex binds to histone H4 tail.

It is found in the cytoplasm. It localises to the nucleus. In terms of biological role, regulatory subunit of the histone acetylase B (HAT-B) complex. The complex acetylates 'Lys-12' of histone H4 which is required for telomeric silencing. This Aspergillus fumigatus (strain ATCC MYA-4609 / CBS 101355 / FGSC A1100 / Af293) (Neosartorya fumigata) protein is Histone acetyltransferase type B subunit 2 (hat2).